The primary structure comprises 334 residues: Glyceraldehyde-3-phosphate dehydrogenase 1 (334 aa).

NAD(+) is bound by residues 11 to 12 (RI), D33, R77, and S119. Residues 150–152 (SCT) and T181 each bind D-glyceraldehyde 3-phosphate. Residue C151 is the Nucleophile of the active site. Position 182 (N182) interacts with NAD(+). Residues R196, 209-210 (TG), and R232 contribute to the D-glyceraldehyde 3-phosphate site. Residue N314 coordinates NAD(+).

Belongs to the glyceraldehyde-3-phosphate dehydrogenase family. In terms of assembly, homotetramer.

The protein localises to the cytoplasm. It catalyses the reaction D-glyceraldehyde 3-phosphate + phosphate + NAD(+) = (2R)-3-phospho-glyceroyl phosphate + NADH + H(+). It participates in carbohydrate degradation; glycolysis; pyruvate from D-glyceraldehyde 3-phosphate: step 1/5. Catalyzes the oxidative phosphorylation of glyceraldehyde 3-phosphate (G3P) to 1,3-bisphosphoglycerate (BPG) using the cofactor NAD. The first reaction step involves the formation of a hemiacetal intermediate between G3P and a cysteine residue, and this hemiacetal intermediate is then oxidized to a thioester, with concomitant reduction of NAD to NADH. The reduced NADH is then exchanged with the second NAD, and the thioester is attacked by a nucleophilic inorganic phosphate to produce BPG. In Bacillus cereus, this protein is Glyceraldehyde-3-phosphate dehydrogenase 1 (gap1).